The following is a 748-amino-acid chain: 5-methyltetrahydropteroyltriglutamate--homocysteine methyltransferase (748 aa).

5-methyltetrahydropteroyltri-L-glutamate contacts are provided by residues 18 to 21 (REWK) and K112. L-homocysteine contacts are provided by residues 420 to 422 (IGS) and E473. L-methionine-binding positions include 420 to 422 (IGS) and E473. W550 is a 5-methyltetrahydropteroyltri-L-glutamate binding site. Position 588 (D588) interacts with L-homocysteine. D588 is a binding site for L-methionine. Position 594 (E594) interacts with 5-methyltetrahydropteroyltri-L-glutamate. The Zn(2+) site is built by H630, C632, and E654. H683 acts as the Proton donor in catalysis. Zn(2+) is bound at residue C715.

It belongs to the vitamin-B12 independent methionine synthase family. Zn(2+) is required as a cofactor.

The catalysed reaction is 5-methyltetrahydropteroyltri-L-glutamate + L-homocysteine = tetrahydropteroyltri-L-glutamate + L-methionine. It participates in amino-acid biosynthesis; L-methionine biosynthesis via de novo pathway; L-methionine from L-homocysteine (MetE route): step 1/1. Its function is as follows. Catalyzes the transfer of a methyl group from 5-methyltetrahydrofolate to homocysteine resulting in methionine formation. This is 5-methyltetrahydropteroyltriglutamate--homocysteine methyltransferase from Staphylococcus epidermidis (strain ATCC 12228 / FDA PCI 1200).